Consider the following 315-residue polypeptide: Taste receptor type 2 member 3 (315 aa).

At 1–5 the chain is on the extracellular side; sequence MGLTD. Residues 6-26 form a helical membrane-spanning segment; it reads GVFLIVCGAQFTLGILXNGFI. Residues 27-41 are Cytoplasmic-facing; that stretch reads GLVNGRSWFKTKRMS. A helical transmembrane segment spans residues 42–62; the sequence is LSDFIIATLALSRIILLCIIL. The Extracellular segment spans residues 63-93; that stretch reads TDSFLIVFSVKEHDSGIIMQLIDVFWTFTNH. The helical transmembrane segment at 94-114 threads the bilayer; it reads LSIWFATCLGVLYCLKIASFS. Residues 115-127 lie on the Cytoplasmic side of the membrane; sequence HPTFLWLKWRVSR. A helical membrane pass occupies residues 128-148; that stretch reads VMVWMLLGALLLSCGSTASLI. Over 149–185 the chain is Extracellular; it reads NEFKLYSVLRGIEATRNVTEHFRKKRNEYYLIHVLGT. Asn-165 carries an N-linked (GlcNAc...) asparagine glycan. A helical membrane pass occupies residues 186-206; that stretch reads LWYLPPLVVSLASYFLLIFSL. The Cytoplasmic portion of the chain corresponds to 207-233; sequence GRHTRQMLQNSTSSRDPSTEAHKRAIR. The chain crosses the membrane as a helical span at residues 234-254; the sequence is IILSFFFLFLLYFLAFLIASF. Residues 255–265 are Extracellular-facing; that stretch reads GNFLPETKMAK. A helical membrane pass occupies residues 266–286; the sequence is MIGEVMTMFYPAGHSFIVILG. Topologically, residues 287-315 are cytoplasmic; it reads NSKLKQTFVEMLRCESGHLKPGSKGPIFS.

It belongs to the G-protein coupled receptor T2R family.

The protein resides in the membrane. Gustducin-coupled receptor implicated in the perception of bitter compounds in the oral cavity and the gastrointestinal tract. Signals through PLCB2 and the calcium-regulated cation channel TRPM5. In Papio hamadryas (Hamadryas baboon), this protein is Taste receptor type 2 member 3 (TAS2R3).